The chain runs to 130 residues: Nascent polypeptide-associated complex protein (130 aa).

Positions 6–74 constitute an NAC-A/B domain; that stretch reads GMNPRKMQQM…PVERDAADAI (69 aa). Positions 65–91 are disordered; sequence PVERDAADAIEAAPADDSDDTDDDDAI. Residues 78–90 are compositionally biased toward acidic residues; it reads PADDSDDTDDDDA.

It belongs to the NAC-alpha family. As to quaternary structure, homodimer. Interacts with the ribosome. Binds ribosomal RNA.

Its function is as follows. Contacts the emerging nascent chain on the ribosome. This chain is Nascent polypeptide-associated complex protein, found in Halobacterium salinarum (strain ATCC 700922 / JCM 11081 / NRC-1) (Halobacterium halobium).